The following is a 126-amino-acid chain: Fatty acid-binding protein, liver (126 aa).

At Ala-2 the chain carries N-acetylalanine. Residues Arg-56, Gln-57, Lys-77, His-99, and Gln-101 each coordinate cholate.

This sequence belongs to the calycin superfamily. Fatty-acid binding protein (FABP) family.

Its subcellular location is the cytoplasm. Its function is as follows. Binds free fatty acids and their coenzyme A derivatives, bilirubin, and some other small molecules in the cytoplasm. May be involved in intracellular lipid transport. Binds 2 molecules of cholate per subunit. This is Fatty acid-binding protein, liver (FABP1) from Gallus gallus (Chicken).